Reading from the N-terminus, the 351-residue chain is Phosphate acyltransferase (351 aa).

This sequence belongs to the PlsX family. Homodimer. Probably interacts with PlsY.

It localises to the cytoplasm. It carries out the reaction a fatty acyl-[ACP] + phosphate = an acyl phosphate + holo-[ACP]. The protein operates within lipid metabolism; phospholipid metabolism. Its function is as follows. Catalyzes the reversible formation of acyl-phosphate (acyl-PO(4)) from acyl-[acyl-carrier-protein] (acyl-ACP). This enzyme utilizes acyl-ACP as fatty acyl donor, but not acyl-CoA. This chain is Phosphate acyltransferase, found in Paramagnetospirillum magneticum (strain ATCC 700264 / AMB-1) (Magnetospirillum magneticum).